A 131-amino-acid chain; its full sequence is Fumarate reductase subunit C (131 aa).

Helical transmembrane passes span 30 to 50, 57 to 77, and 109 to 129; these read EGTAVPAVWFSIELIFALFAL, WAGFVDFLQNPVIVIINLITL, and IIKSLWAVTVVATIVILFVAL.

It belongs to the FrdC family. Part of an enzyme complex containing four subunits: a flavoprotein (FrdA), an iron-sulfur protein (FrdB), and two hydrophobic anchor proteins (FrdC and FrdD).

Its subcellular location is the cell inner membrane. Functionally, two distinct, membrane-bound, FAD-containing enzymes are responsible for the catalysis of fumarate and succinate interconversion; fumarate reductase is used in anaerobic growth, and succinate dehydrogenase is used in aerobic growth. Anchors the catalytic components of the fumarate reductase complex to the cell inner membrane, binds quinones. This chain is Fumarate reductase subunit C, found in Shigella flexneri.